Reading from the N-terminus, the 256-residue chain is Thiazole synthase (256 aa).

Lys-96 serves as the catalytic Schiff-base intermediate with DXP. 1-deoxy-D-xylulose 5-phosphate-binding positions include Gly-157, 184 to 185 (AG), and 206 to 207 (NT).

The protein belongs to the ThiG family. In terms of assembly, homotetramer. Forms heterodimers with either ThiH or ThiS.

The protein resides in the cytoplasm. It catalyses the reaction [ThiS sulfur-carrier protein]-C-terminal-Gly-aminoethanethioate + 2-iminoacetate + 1-deoxy-D-xylulose 5-phosphate = [ThiS sulfur-carrier protein]-C-terminal Gly-Gly + 2-[(2R,5Z)-2-carboxy-4-methylthiazol-5(2H)-ylidene]ethyl phosphate + 2 H2O + H(+). It participates in cofactor biosynthesis; thiamine diphosphate biosynthesis. In terms of biological role, catalyzes the rearrangement of 1-deoxy-D-xylulose 5-phosphate (DXP) to produce the thiazole phosphate moiety of thiamine. Sulfur is provided by the thiocarboxylate moiety of the carrier protein ThiS. In vitro, sulfur can be provided by H(2)S. This chain is Thiazole synthase, found in Brucella canis (strain ATCC 23365 / NCTC 10854 / RM-666).